The chain runs to 443 residues: Transcriptional adapter 2-alpha (443 aa).

P6 is subject to Phosphoserine; in variant Ser-6. The segment at 12–69 (SDKPPCRGCSSYLMEPYIKCAECGPPPFFLCLQCFTRGFEYKKHQSDHTYEIMTSDFP) adopts a ZZ-type zinc-finger fold. C17, C20, C31, C34, C42, C45, H55, and H59 together coordinate Zn(2+). The 53-residue stretch at 70 to 122 (VLDPSWTAQEEMALLEAVMDCGFGNWQDVANQMCTKTKEECEKHYMKHFINNP) folds into the SANT domain. Residues K132 and K138 each participate in a glycyl lysine isopeptide (Lys-Gly) (interchain with G-Cter in SUMO2) cross-link. The disordered stretch occupies residues 348–372 (SPSIPMASNSGRRSAPPLNLTGLPG). The region spanning 356–443 (NSGRRSAPPL…LIREGYITKG (88 aa)) is the SWIRM domain. The DNA-binding element occupies 426–435 (KTRKIYDFLI).

As to quaternary structure, interacts with GCN5 and NR3C1. Associated with the P/CAF protein in the PCAF complex. Component of the PCAF complex, at least composed of TADA2L/ADA2, TADA3L/ADA3, TAF5L/PAF65-beta, TAF6L/PAF65-alpha, TAF10/TAFII30, TAF12/TAFII20, TAF9/TAFII31 and TRRAP. Component of the ADA2A-containing complex (ATAC), composed of KAT14, KAT2A, TADA2L, TADA3L, ZZ3, MBIP, WDR5, YEATS2, CCDC101 and DR1. Interacts with CCDC134. As to expression, expressed in all tissues, but most abundantly in testis.

Its subcellular location is the nucleus. The protein resides in the chromosome. Functionally, component of the ATAC complex, a complex with histone acetyltransferase activity on histones H3 and H4. Required for the function of some acidic activation domains, which activate transcription from a distant site. Binds double-stranded DNA. Binds dinucleosomes, probably at the linker region between neighboring nucleosomes. Plays a role in chromatin remodeling. May promote TP53/p53 'Lys-321' acetylation, leading to reduced TP53 stability and transcriptional activity. May also promote XRCC6 acetylation thus facilitating cell apoptosis in response to DNA damage. The chain is Transcriptional adapter 2-alpha (TADA2A) from Homo sapiens (Human).